The chain runs to 470 residues: Glutamate--tRNA ligase (470 aa).

The 'HIGH' region motif lies at 12 to 22 (PSPTGIFHVGG). 4 residues coordinate Zn(2+): Cys-103, Cys-105, Cys-125, and Asp-127. Residues 236–240 (KLSKR) carry the 'KMSKS' region motif. Lys-239 provides a ligand contact to ATP.

It belongs to the class-I aminoacyl-tRNA synthetase family. Glutamate--tRNA ligase type 1 subfamily. As to quaternary structure, monomer. It depends on Zn(2+) as a cofactor.

The protein resides in the cytoplasm. It carries out the reaction tRNA(Glu) + L-glutamate + ATP = L-glutamyl-tRNA(Glu) + AMP + diphosphate. Catalyzes the attachment of glutamate to tRNA(Glu) in a two-step reaction: glutamate is first activated by ATP to form Glu-AMP and then transferred to the acceptor end of tRNA(Glu). In Frankia alni (strain DSM 45986 / CECT 9034 / ACN14a), this protein is Glutamate--tRNA ligase.